Reading from the N-terminus, the 103-residue chain is DNA-directed RNA polymerase subunit omega (103 aa).

The protein belongs to the RNA polymerase subunit omega family. In terms of assembly, the RNAP catalytic core consists of 2 alpha, 1 beta, 1 beta' and 1 omega subunit. When a sigma factor is associated with the core the holoenzyme is formed, which can initiate transcription.

The enzyme catalyses RNA(n) + a ribonucleoside 5'-triphosphate = RNA(n+1) + diphosphate. Functionally, promotes RNA polymerase assembly. Latches the N- and C-terminal regions of the beta' subunit thereby facilitating its interaction with the beta and alpha subunits. In Streptococcus agalactiae serotype III (strain NEM316), this protein is DNA-directed RNA polymerase subunit omega.